The sequence spans 72 residues: Putative ORF1 protein (72 aa).

This is Putative ORF1 protein (ORF1) from Leishmania RNA virus 1 - 1 (isolate Leishmania guyanensis) (LRV-1-1).